Consider the following 295-residue polypeptide: MAMGTHFGGLWLALLCMVSATMGAVPRKPVDVPFGRNYVPTWAFDHIKYFNGGSQIQLSLDKYTGTGFQSKGSYLFGHFSMQIKMVPGDSAGTVTAFYLSSQNSEHDEIDFEFLGNRTGQPYILQTNVFTGGKGDREQRIFLWFDPTKEYHSYSVLWNLFLIIFFVDDVPIRVFKNSKDLGVRFPFDQPMKIYSSLWNADDWATRGGLEKTDWSKAPFVASYRSFHVDGCEASVNAKFCDTQGKRWWDQKEFQDLDSFQYRRLRWVRSKYTIYNYCTDRKRYPVMPPECKRDRDI.

A signal peptide spans 1–23; it reads MAMGTHFGGLWLALLCMVSATMG. The 199-residue stretch at 24–222 folds into the GH16 domain; it reads AVPRKPVDVP…WSKAPFVASY (199 aa). Glu108 functions as the Nucleophile in the catalytic mechanism. Glu112 functions as the Proton donor in the catalytic mechanism. Glu112 provides a ligand contact to xyloglucan. Asn116 carries an N-linked (GlcNAc...) asparagine glycan. Residues 125-127, 135-137, 201-202, and Gly206 each bind xyloglucan; these read QTN, DRE, and DW. 2 cysteine pairs are disulfide-bonded: Cys230–Cys239 and Cys276–Cys289. Arg281 provides a ligand contact to xyloglucan.

This sequence belongs to the glycosyl hydrolase 16 family. XTH group 1 subfamily. In terms of processing, contains at least one intrachain disulfide bond essential for its enzymatic activity. Expressed in fruit pulp.

It localises to the secreted. It is found in the cell wall. Its subcellular location is the extracellular space. The protein localises to the apoplast. The catalysed reaction is breaks a beta-(1-&gt;4) bond in the backbone of a xyloglucan and transfers the xyloglucanyl segment on to O-4 of the non-reducing terminal glucose residue of an acceptor, which can be a xyloglucan or an oligosaccharide of xyloglucan.. Its function is as follows. Catalyzes xyloglucan endotransglycosylation (XET). Cleaves and religates xyloglucan polymers. Does not catalyze xyloglucan endohydrolysis (XEH). Probably involved in cell wall restructuring during fruit ripening and postharvest fruit softening. This Diospyros kaki (Kaki persimmon) protein is Xyloglucan endotransglucosylase protein 2.